A 415-amino-acid chain; its full sequence is Tyrosine--tRNA ligase (415 aa).

Position 34 (Tyr34) interacts with L-tyrosine. The 'HIGH' region signature appears at 39–48 (PTADSLHLGH). Tyr164 and Gln168 together coordinate L-tyrosine. The 'KMSKS' region motif lies at 226-230 (KFGKS). ATP is bound at residue Lys229. The region spanning 348–415 (KNVVDFLVDG…KKKYFLGKVK (68 aa)) is the S4 RNA-binding domain.

Belongs to the class-I aminoacyl-tRNA synthetase family. TyrS type 1 subfamily. In terms of assembly, homodimer.

Its subcellular location is the cytoplasm. The catalysed reaction is tRNA(Tyr) + L-tyrosine + ATP = L-tyrosyl-tRNA(Tyr) + AMP + diphosphate + H(+). Its function is as follows. Catalyzes the attachment of tyrosine to tRNA(Tyr) in a two-step reaction: tyrosine is first activated by ATP to form Tyr-AMP and then transferred to the acceptor end of tRNA(Tyr). The sequence is that of Tyrosine--tRNA ligase from Leuconostoc mesenteroides subsp. mesenteroides (strain ATCC 8293 / DSM 20343 / BCRC 11652 / CCM 1803 / JCM 6124 / NCDO 523 / NBRC 100496 / NCIMB 8023 / NCTC 12954 / NRRL B-1118 / 37Y).